Here is a 221-residue protein sequence, read N- to C-terminus: CASP-like protein 2U10 (221 aa).

The tract at residues 1–22 (MDSSSKPMNGSAGGSPVGDERK) is disordered. Topologically, residues 1–31 (MDSSSKPMNGSAGGSPVGDERKMGDHEHEFR) are cytoplasmic. The chain crosses the membrane as a helical span at residues 32 to 52 (ISIILLRSFLLVLVIISEALM). The Extracellular portion of the chain corresponds to 53 to 91 (VTDRETGSVPLPFFGLPRPVFVTKTAKYELVTGLKFYVD). Residues 92–112 (ALGVVIGYTVLHLLFNIGLVA) traverse the membrane as a helical segment. The Cytoplasmic portion of the chain corresponds to 113 to 122 (TKGTVVDCKS). Residues 123-143 (VAWISFIADSMMGYLLLSSAA) traverse the membrane as a helical segment. Over 144–174 (VATEIGYLAEEGAPAVLWRKVCNAFGYFCTV) the chain is Extracellular. The helical transmembrane segment at 175 to 195 (YAISVVICFIAALVSFVVVGI) threads the bilayer. The Cytoplasmic portion of the chain corresponds to 196–221 (SAYHLFRLYGIQQQAAREKEKLSAEM).

The protein belongs to the Casparian strip membrane proteins (CASP) family. As to quaternary structure, homodimer and heterodimers.

It is found in the cell membrane. This Selaginella moellendorffii (Spikemoss) protein is CASP-like protein 2U10.